We begin with the raw amino-acid sequence, 161 residues long: Putative 4-hydroxy-4-methyl-2-oxoglutarate aldolase (161 aa).

Substrate contacts are provided by residues 77–80 (GGNL) and arginine 99. Residue aspartate 100 participates in a divalent metal cation binding.

Belongs to the class II aldolase/RraA-like family. Homotrimer. A divalent metal cation serves as cofactor.

The enzyme catalyses 4-hydroxy-4-methyl-2-oxoglutarate = 2 pyruvate. The catalysed reaction is oxaloacetate + H(+) = pyruvate + CO2. Its function is as follows. Catalyzes the aldol cleavage of 4-hydroxy-4-methyl-2-oxoglutarate (HMG) into 2 molecules of pyruvate. Also contains a secondary oxaloacetate (OAA) decarboxylase activity due to the common pyruvate enolate transition state formed following C-C bond cleavage in the retro-aldol and decarboxylation reactions. The polypeptide is Putative 4-hydroxy-4-methyl-2-oxoglutarate aldolase (Methylococcus capsulatus (strain ATCC 33009 / NCIMB 11132 / Bath)).